Reading from the N-terminus, the 583-residue chain is Threonine--tRNA ligase (583 aa).

The tract at residues 185 to 478 is catalytic; sequence DHRKLGRELD…LVEHYGGAFP (294 aa). Zn(2+)-binding residues include cysteine 278, histidine 329, and histidine 455.

The protein belongs to the class-II aminoacyl-tRNA synthetase family. In terms of assembly, homodimer. Zn(2+) serves as cofactor.

The protein localises to the cytoplasm. The enzyme catalyses tRNA(Thr) + L-threonine + ATP = L-threonyl-tRNA(Thr) + AMP + diphosphate + H(+). In terms of biological role, catalyzes the attachment of threonine to tRNA(Thr) in a two-step reaction: L-threonine is first activated by ATP to form Thr-AMP and then transferred to the acceptor end of tRNA(Thr). Also edits incorrectly charged L-seryl-tRNA(Thr). This Borrelia turicatae (strain 91E135) protein is Threonine--tRNA ligase.